The chain runs to 269 residues: Leucinostatins biosynthesis cluster protein T (269 aa).

A signal peptide spans 1 to 15; sequence MHIILTGTGLVGAIA. Asparagine 254 is a glycosylation site (N-linked (GlcNAc...) asparagine).

In terms of biological role, part of the gene cluster that mediates the biosynthesis of the lipopeptide antibiotics leucinostatins that show extensive biological activities, including antimalarial, antiviral, antibacterial, antifungal, and antitumor activities, as well as phytotoxic. The function of lcsT within the leucinostatins biosynthesis has not been identified yet. This is Leucinostatins biosynthesis cluster protein T from Purpureocillium lilacinum (Paecilomyces lilacinus).